A 393-amino-acid chain; its full sequence is Protein TsgA (393 aa).

A run of 12 helical transmembrane segments spans residues 11-31 (WISFLSYALTGALVIVTGMVM), 51-71 (FLNAGILISIFLNAWLMEIVP), 78-98 (FGFILMVLAVAGLMFSHSLAL), 101-121 (AAMFVLGLVSGITMSIGTFLI), 134-154 (LLFTDSFFSMAGMIFPMVAAF), 162-182 (WYWVYACIGLVYLAIFILTFG), 206-226 (IGVLFLAVAALCYILGQLGFI), 245-265 (ALVSDFWMSYMFGMWAFSFIL), 273-293 (ILTVLAGMAAVLMYLFITGTQ), 298-318 (WFILTLGFFSSAIYTSIITLG), 332-352 (FILTCGTIGTMLTFVVTGPIV), and 361-381 (LLTANGLYAVVFVMCFALGFV).

It belongs to the major facilitator superfamily. TsgA family.

The protein resides in the cell inner membrane. The sequence is that of Protein TsgA from Salmonella heidelberg (strain SL476).